A 354-amino-acid chain; its full sequence is MRVADFTFELPDSLIARHPLAERRSSRLLTLDGPTGALAHRQFTDLLEHLRSGDLMVFNNTRVIPARLFGQKASGGKLEILVERVLDSHRVLAHVRASKSPKPGSSILIDGGGEAEMVARHDALFELRFAEEVLPLLDRVGHMPLPPYIDRPDEGADRERYQTVYAQRAGAVAAPTAGLHFDQPLMEAIAAKGVETAFVTLHVGAGTFQPVRVEQIEDHHMHSEWLEVSQDVVDAVAACRARGGRVIAVGTTSVRSLESAARDGQLKPFSGDTDIFIYPGRPFHVVDALVTNFHLPESTLLMLVSAFAGYPETMAAYAAAIEHGYRFFSYGDAMFITRNPAPTAPQESAPEDHA.

Belongs to the QueA family. In terms of assembly, monomer.

It is found in the cytoplasm. It catalyses the reaction 7-aminomethyl-7-carbaguanosine(34) in tRNA + S-adenosyl-L-methionine = epoxyqueuosine(34) in tRNA + adenine + L-methionine + 2 H(+). It participates in tRNA modification; tRNA-queuosine biosynthesis. In terms of biological role, transfers and isomerizes the ribose moiety from AdoMet to the 7-aminomethyl group of 7-deazaguanine (preQ1-tRNA) to give epoxyqueuosine (oQ-tRNA). The chain is S-adenosylmethionine:tRNA ribosyltransferase-isomerase from Pseudomonas syringae pv. tomato (strain ATCC BAA-871 / DC3000).